The sequence spans 305 residues: MTQPTVTADDPDLSHVGPRDKAEILAQALPYIRKFHGKTMVIKYGGNAMTDPALQADFAEDVVLLKLVGMNPVVVHGGGPQIEAALNRLGKKGHFIQGMRVTDEETMEVVEWVLAGQVQQDIVGLINQAGGKAVGLTGRDGGLIRAQKLKMVDKDDPAKEHDIGFVGDIVSIDPSVVKALQDDAFIPVISPIGFGESNESYNINADVVAGKLATVLKAEKLVLLTNTPGVLNKAGELLTDLTAREIDDLFADGTISGGMLPKIEGALDAAKSGVNSVHIIDGRVPHAMLLEILTDQAYGTMIRSH.

Residues 78–79 (GG), R100, and N202 contribute to the substrate site.

It belongs to the acetylglutamate kinase family. ArgB subfamily.

It is found in the cytoplasm. It carries out the reaction N-acetyl-L-glutamate + ATP = N-acetyl-L-glutamyl 5-phosphate + ADP. It participates in amino-acid biosynthesis; L-arginine biosynthesis; N(2)-acetyl-L-ornithine from L-glutamate: step 2/4. Catalyzes the ATP-dependent phosphorylation of N-acetyl-L-glutamate. The polypeptide is Acetylglutamate kinase (Polaromonas sp. (strain JS666 / ATCC BAA-500)).